Consider the following 401-residue polypeptide: Phosphoglycerate kinase (401 aa).

Substrate contacts are provided by residues 20 to 22, R35, 58 to 61, R117, and R154; these read DFN and HLGR. ATP contacts are provided by residues K204, G298, E329, and 358–361; that span reads GGDS.

Belongs to the phosphoglycerate kinase family. Monomer.

It is found in the cytoplasm. It carries out the reaction (2R)-3-phosphoglycerate + ATP = (2R)-3-phospho-glyceroyl phosphate + ADP. It functions in the pathway carbohydrate degradation; glycolysis; pyruvate from D-glyceraldehyde 3-phosphate: step 2/5. The polypeptide is Phosphoglycerate kinase (Bifidobacterium adolescentis (strain ATCC 15703 / DSM 20083 / NCTC 11814 / E194a)).